The primary structure comprises 1049 residues: Probable disease resistance protein RF9 (1049 aa).

Residues 25–41 (QGVEDQVTELKRDLNLL) adopt a coiled-coil conformation. Positions 139-158 (GYKQPQGDKQREMRPRFSKD) are disordered. A compositionally biased stretch (basic and acidic residues) spans 144-158 (QGDKQREMRPRFSKD). In terms of domain architecture, NB-ARC spans 147–460 (KQREMRPRFS…AEGIFQPRHY (314 aa)). 190-197 (GMGGLGKT) contributes to the ATP binding site. LRR repeat units follow at residues 584–608 (LELLRVLDIHRAKLKGGKLASSIGQ), 609–634 (LIHLRYLNLKHAEVTHIPYSLGNLKL), 657–682 (MQQLRYLALPKDMGRKTKLELSNLVK), 683–707 (LETLKNFSTKNCSLEDLRGMVRLRT), 776–799 (PSHLTTLYLQHCRLEEDPMPILEK), 800–827 (LHQLKELELRRKSFSGKEMVCSSGGFPQ), 849–873 (MPVLHTLDIRDCRKLKQLPDEHLPS), 896–923 (LVHLKELQLLFRSFSGRIMVCAGSGFPQ), 945–968 (MPQLHTLEIRRCPKLKKLPNGFPQ), and 990–1015 (MPLLHTLRIWNCPKLKQLPDGLRFIY).

Belongs to the disease resistance NB-LRR family.

Its function is as follows. Potential disease resistance protein. The polypeptide is Probable disease resistance protein RF9 (RF9) (Arabidopsis thaliana (Mouse-ear cress)).